The chain runs to 540 residues: ATP-dependent RNA helicase DBP5 (540 aa).

2 stretches are compositionally biased toward basic and acidic residues: residues 24-36 (KSGE…KKGS) and 50-119 (KEGD…EPKE). Residues 24–124 (KSGEKLEEIK…KEPKEPATNL (101 aa)) form a disordered region. The Q motif motif lies at 150–178 (KSFEELGLSPELLKGLYAMKFNKPSKIQE). The Helicase ATP-binding domain maps to 183–350 (LLLSNPPRNM…ERLVPDANSL (168 aa)). 196–203 (SQSGTGKT) provides a ligand contact to ATP. Positions 297–300 (DEAD) match the DEAD box motif. The region spanning 361–538 (GIKQLYMDCR…EVEKIVKKVI (178 aa)) is the Helicase C-terminal domain.

This sequence belongs to the DEAD box helicase family. DDX19/DBP5 subfamily. As to quaternary structure, associates with the nuclear pore complex.

It is found in the cytoplasm. Its subcellular location is the nucleus. It localises to the nuclear pore complex. The protein localises to the nucleus membrane. It carries out the reaction ATP + H2O = ADP + phosphate + H(+). Functionally, ATP-dependent RNA helicase associated with the nuclear pore complex and essential for mRNA export from the nucleus. May participate in a terminal step of mRNA export through the removal of proteins that accompany mRNA through the nucleopore complex. May also be involved in early transcription. The protein is ATP-dependent RNA helicase DBP5 (DBP5) of Candida albicans (strain SC5314 / ATCC MYA-2876) (Yeast).